The sequence spans 128 residues: Small ribosomal subunit protein uS11 (128 aa).

The protein belongs to the universal ribosomal protein uS11 family. Part of the 30S ribosomal subunit. Interacts with proteins S7 and S18. Binds to IF-3.

Functionally, located on the platform of the 30S subunit, it bridges several disparate RNA helices of the 16S rRNA. Forms part of the Shine-Dalgarno cleft in the 70S ribosome. The protein is Small ribosomal subunit protein uS11 of Wolbachia pipientis subsp. Culex pipiens (strain wPip).